The sequence spans 1059 residues: Carbamoyl phosphate synthase large chain (1059 aa).

The segment at 1–401 (MPKRTDIKKI…SLLKACRSLE (401 aa)) is carboxyphosphate synthetic domain. Residues Arg-129, Arg-169, Gly-175, Gly-176, Arg-208, Ile-210, Glu-215, Gly-241, Ile-242, His-243, Gln-284, and Glu-298 each contribute to the ATP site. Residues 133–327 (KQLMEDLEQP…IAKLAAKIAV (195 aa)) enclose the ATP-grasp 1 domain. Mg(2+)-binding residues include Gln-284, Glu-298, and Asn-300. Mn(2+) is bound by residues Gln-284, Glu-298, and Asn-300. The oligomerization domain stretch occupies residues 402–546 (IGVYHNEMPE…YSTYEWENES (145 aa)). Residues 547–929 (IKSEKESVIV…ALYKAFEASY (383 aa)) form a carbamoyl phosphate synthetic domain region. An ATP-grasp 2 domain is found at 671 to 861 (EQALKDLNIP…MAQIATKLIL (191 aa)). ATP contacts are provided by Arg-707, Ser-746, Leu-748, Glu-752, Gly-777, Val-778, His-779, Ser-780, Gln-820, and Glu-832. The Mg(2+) site is built by Gln-820, Glu-832, and Asn-834. Residues Gln-820, Glu-832, and Asn-834 each coordinate Mn(2+). Residues 930–1059 (FHLPAFGNVI…ESRGFITQAI (130 aa)) enclose the MGS-like domain. The interval 930 to 1059 (FHLPAFGNVI…ESRGFITQAI (130 aa)) is allosteric domain.

The protein belongs to the CarB family. In terms of assembly, composed of two chains; the small (or glutamine) chain promotes the hydrolysis of glutamine to ammonia, which is used by the large (or ammonia) chain to synthesize carbamoyl phosphate. Tetramer of heterodimers (alpha,beta)4. It depends on Mg(2+) as a cofactor. Mn(2+) serves as cofactor.

The catalysed reaction is hydrogencarbonate + L-glutamine + 2 ATP + H2O = carbamoyl phosphate + L-glutamate + 2 ADP + phosphate + 2 H(+). It catalyses the reaction hydrogencarbonate + NH4(+) + 2 ATP = carbamoyl phosphate + 2 ADP + phosphate + 2 H(+). The protein operates within amino-acid biosynthesis; L-arginine biosynthesis; carbamoyl phosphate from bicarbonate: step 1/1. Its pathway is pyrimidine metabolism; UMP biosynthesis via de novo pathway; (S)-dihydroorotate from bicarbonate: step 1/3. Functionally, large subunit of the glutamine-dependent carbamoyl phosphate synthetase (CPSase). CPSase catalyzes the formation of carbamoyl phosphate from the ammonia moiety of glutamine, carbonate, and phosphate donated by ATP, constituting the first step of 2 biosynthetic pathways, one leading to arginine and/or urea and the other to pyrimidine nucleotides. The large subunit (synthetase) binds the substrates ammonia (free or transferred from glutamine from the small subunit), hydrogencarbonate and ATP and carries out an ATP-coupled ligase reaction, activating hydrogencarbonate by forming carboxy phosphate which reacts with ammonia to form carbamoyl phosphate. This is Carbamoyl phosphate synthase large chain from Streptococcus mutans serotype c (strain ATCC 700610 / UA159).